A 354-amino-acid polypeptide reads, in one-letter code: Serine/threonine-protein phosphatase 2A activator 2 (354 aa).

This sequence belongs to the PTPA-type PPIase family.

It is found in the cytoplasm. It carries out the reaction [protein]-peptidylproline (omega=180) = [protein]-peptidylproline (omega=0). In terms of biological role, PPIases accelerate the folding of proteins. It catalyzes the cis-trans isomerization of proline imidic peptide bonds in oligopeptides. Acts as a regulatory subunit for PP2A-like phosphatases modulating their activity or substrate specificity, probably by inducing a conformational change in the catalytic subunit, a direct target of the PPIase. Can reactivate inactive phosphatase PP2A-phosphatase methylesterase complexes (PP2Ai) in presence of ATP and Mg(2+) by dissociating the inactive form from the complex. The protein is Serine/threonine-protein phosphatase 2A activator 2 (RRD2) of Yarrowia lipolytica (strain CLIB 122 / E 150) (Yeast).